The sequence spans 426 residues: UPF0597 protein CLI_1810 (426 aa).

Belongs to the UPF0597 family.

The chain is UPF0597 protein CLI_1810 from Clostridium botulinum (strain Langeland / NCTC 10281 / Type F).